The following is a 216-amino-acid chain: V-type ATP synthase subunit D (216 aa).

This sequence belongs to the V-ATPase D subunit family.

Functionally, produces ATP from ADP in the presence of a proton gradient across the membrane. The chain is V-type ATP synthase subunit D from Clostridium botulinum (strain Loch Maree / Type A3).